Consider the following 243-residue polypeptide: Venom peptide isomerase heavy chain (243 aa).

The region spanning Ile-1–Val-243 is the Peptidase S1 domain. Cys-31 and Cys-47 are disulfide-bonded. Active-site charge relay system residues include His-46 and Asp-96. An N-linked (GlcNAc...) asparagine glycan is attached at Asn-127. Cystine bridges form between Cys-159-Cys-181 and Cys-190-Cys-219. Ser-194 (charge relay system) is an active-site residue.

Belongs to the peptidase S1 family. Heterodimer with venom peptide isomerase light chain; disulfide-linked. N-linked glycan at Asn-127 consists of Man3-GlcNAc2-Fuc. In terms of tissue distribution, expressed by the venom gland.

It localises to the secreted. Its function is as follows. Peptide isomerase that inverts the chirality at the Ser-81 of omega-Aga IVB. Acts cofactor-independently. In Agelenopsis aperta (North American funnel-web spider), this protein is Venom peptide isomerase heavy chain.